The primary structure comprises 1044 residues: MATPAGLERWVQDELHSVLGLSERHVAQFLIGTAQRCTSAEEFVQRLRDTDTLDLSGPARDFALRLWNKVPRKAVVEKPARAAEREARALLEKNRSYRLLEDSEESSEETVSRAGSSLQKKRKKRKHLRKKREEEEEEEEEEASEKGKKKTGGSKQQTEKPESEDEWERTERERLQDLEERDAFAERVRQRDKDRTRNVLERSDKKAYEEAQKRLKMAEEDRKAMVPELRKKSRREYLAKREREKLEDLEAELADEEFLFGDVELSRHERQELKYKRRVRDLAREYRAAGEQEKLEATNRYHMPKETRGQPARAVDLVEEESGAPGEEQRRWEEARLGAASLKFGARDAASQEPKYQLVLEEEETIEFVRATQLQGNEEPSAPPTSTQAQQKESIQAVRRSLPVFPFREELLAAIANHQVLIIEGETGSGKTTQIPQYLFEEGYTNKGMKIACTQPRRVAAMSVAARVAREMGVKLGNEVGYSIRFEDCTSERTVLRYMTDGMLLREFLSEPDLASYSVVMVDEAHERTLHTDILFGLIKDVARFRPELKVLVASATMDTARFSTFFDDAPVFRIPGRRFPVDIFYTKAPEADYLEACVVSVLQIHVTQPPGDILVFLTGQEEIEAACEMLQDRCRRLGSKIRELLVLPIYANLPSDMQARIFQPTPPGARKVVVATNIAETSLTIEGIIYVLDPGFCKQKSYNPRTGMESLTVTPCSKASANQRAGRAGRVAAGKCFRLYTAWAYQHELEETTVPEIQRTSLGNVVLLLKSLGIHDLMHFDFLDPPPYETLLLALEQLYALGALNHLGELTTSGRKMAELPVDPMLSKMILASEKYSCSEEILTVAAMLSVNNSIFYRPKDKVVHADNARVNFFLPGGDHLVLLNVYTQWAESGYSSQWCYENFVQFRSMRRARDVREQLEGLLERVEVGLSSCQGDYIRVRKAITAGYFYHTARLTRSGYRTVKQQQTVFIHPNSSLFEQQPRWLLYHELVLTTKEFMRQVLEIESSWLLEVAPHYYKAKELEDPHAKKMPKKIGKTREELG.

Disordered regions lie at residues 101-210 and 374-394; these read EDSE…AYEE and LQGN…QKES. A phosphoserine mark is found at Ser103, Ser106, and Ser107. Residues 119-130 show a composition bias toward basic residues; that stretch reads QKKRKKRKHLRK. The span at 134–143 shows a compositional bias: acidic residues; sequence EEEEEEEEEA. Ser163 is subject to Phosphoserine. The span at 169–210 shows a compositional bias: basic and acidic residues; sequence RTERERLQDLEERDAFAERVRQRDKDRTRNVLERSDKKAYEE. Residues 412 to 576 form the Helicase ATP-binding domain; it reads LAAIANHQVL…FDDAPVFRIP (165 aa). 425-432 provides a ligand contact to ATP; that stretch reads GETGSGKT. Positions 523-526 match the DEAH box motif; that stretch reads DEAH. The Helicase C-terminal domain occupies 601–774; the sequence is SVLQIHVTQP…NVVLLLKSLG (174 aa). Position 715 is a phosphothreonine (Thr715).

The protein belongs to the DEAD box helicase family. DEAH subfamily. DDX16/PRP8 sub-subfamily. As to quaternary structure, component of pre-catalytic spliceosome complexes. Component of the minor spliceosome, which splices U12-type introns. Interacts with GPKOW. Interacts with TRIM6. Interacts with RIGI.

It localises to the nucleus. It is found in the nucleoplasm. The protein resides in the cytoplasm. It catalyses the reaction ATP + H2O = ADP + phosphate + H(+). Required for pre-mRNA splicing as a component of the spliceosome. Contributes to pre-mRNA splicing after spliceosome formation and prior to the first transesterification reaction. As a component of the minor spliceosome, involved in the splicing of U12-type introns in pre-mRNAs. Also plays a role in innate antiviral response by acting as a pattern recognition receptor sensing splicing signals in viral RNA. Mechanistically, TRIM6 promotes the interaction between unanchored 'Lys-48'-polyubiquitin chains and DHX16, leading to DHX16 interaction with RIGI and ssRNA to amplify RIGI-dependent innate antiviral immune responses. The polypeptide is Pre-mRNA-splicing factor ATP-dependent RNA helicase DHX16 (DHX16) (Pan troglodytes (Chimpanzee)).